We begin with the raw amino-acid sequence, 724 residues long: Probable metal-nicotianamine transporter YSL8 (724 aa).

A disordered region spans residues 1–58 (MRKGGLTPDRDRQIEEHELQETGISPDIERLKRNINATPYQREEEEEDREEQEESVEG). Residues 8–20 (PDRDRQIEEHELQ) are compositionally biased toward basic and acidic residues. S25 carries the post-translational modification Phosphoserine. Residues 43-56 (EEEEEDREEQEESV) show a composition bias toward acidic residues. A run of 7 helical transmembrane segments spans residues 72-92 (LTIR…FIVM), 96-116 (LTTG…FFFV), 144-164 (CVVA…LFAM), 184-204 (LGWM…SVVP), 245-265 (VLGK…FFTA), 304-324 (IINI…WPLI), and 349-369 (VFIA…KVLI). Positions 386–407 (RSSLAHKEDPPASPASPLTPRI) are disordered. 8 helical membrane-spanning segments follow: residues 423–443 (IPSW…TAIL), 455–475 (IIVI…GAGL), 478–497 (WSLA…AWAG), 501–520 (GGLL…VSTA), 541–561 (FVSQ…VFWL), 603–623 (LMLC…KDCL), 641–661 (FFLG…LFVW), and 679–699 (GLIC…IAGV).

This sequence belongs to the YSL (TC 2.A.67.2) family.

The protein resides in the membrane. Its function is as follows. May be involved in the transport of nicotianamine-chelated metals. In Arabidopsis thaliana (Mouse-ear cress), this protein is Probable metal-nicotianamine transporter YSL8 (YSL8).